A 376-amino-acid polypeptide reads, in one-letter code: N-acetyldiaminopimelate deacetylase (376 aa).

Residue Asp69 is part of the active site. Glu127 acts as the Proton acceptor in catalysis.

It belongs to the peptidase M20A family. N-acetyldiaminopimelate deacetylase subfamily.

The catalysed reaction is N-acetyl-(2S,6S)-2,6-diaminopimelate + H2O = (2S,6S)-2,6-diaminopimelate + acetate. The protein operates within amino-acid biosynthesis; L-lysine biosynthesis via DAP pathway; LL-2,6-diaminopimelate from (S)-tetrahydrodipicolinate (acetylase route): step 3/3. Its function is as follows. Catalyzes the conversion of N-acetyl-diaminopimelate to diaminopimelate and acetate. This is N-acetyldiaminopimelate deacetylase from Lactococcus lactis subsp. cremoris (strain SK11).